Consider the following 560-residue polypeptide: DNA-directed primase/polymerase protein (560 aa).

Positions 1–22 (MNRKWEAKLKQIEERASHYERK) form a coiled coil. Substrate is bound by residues Arg76, 114 to 116 (DLE), and 165 to 169 (KFSRH). Asp114 and Glu116 together coordinate Mn(2+). Positions 203-223 (EDDDSAPETTGHGFPHFSEAP) are disordered. At Ser255 the chain carries Phosphoserine. Residues 288-291 (RNFR) and Lys297 each bind substrate. Zn(2+)-binding residues include Cys419, His426, Cys446, and Cys451. The Zinc knuckle motif signature appears at 419–452 (CENIGRAHKSNNIMILVDLKNEVWYQKCHDPVCK). A disordered region spans residues 480–507 (TTDEADETRSNETQNPHKPSPSRLSTGA). An interaction with RPA1 region spans residues 481–560 (TDEADETRSN…DELIIEVLQE (80 aa)). Over residues 490-507 (NETQNPHKPSPSRLSTGA) the composition is skewed to polar residues. Short sequence motifs (RPA1-binding motif) lie at residues 513–527 (WDNG…EATE) and 548–556 (EIPDELIIE).

This sequence belongs to the eukaryotic-type primase small subunit family. Interacts with RPA1; leading to recruitment to chromatin and stimulate DNA primase activity. Interacts with SSBP1. Interacts with POLDIP2; leading to enhance DNA polymerase activity. The cofactor is Mn(2+).

The protein localises to the nucleus. The protein resides in the mitochondrion matrix. It localises to the chromosome. It carries out the reaction ssDNA + n NTP = ssDNA/pppN(pN)n-1 hybrid + (n-1) diphosphate.. It catalyses the reaction DNA(n) + a 2'-deoxyribonucleoside 5'-triphosphate = DNA(n+1) + diphosphate. DNA primase and DNA polymerase required to tolerate replication-stalling lesions by bypassing them. Required to facilitate mitochondrial and nuclear replication fork progression by initiating de novo DNA synthesis using dNTPs and acting as an error-prone DNA polymerase able to bypass certain DNA lesions. Shows a high capacity to tolerate DNA damage lesions such as 8oxoG and abasic sites in DNA. Provides different translesion synthesis alternatives when DNA replication is stalled: able to synthesize DNA primers downstream of lesions, such as ultraviolet (UV) lesions, R-loops and G-quadruplexes, to allow DNA replication to continue. Can also realign primers ahead of 'unreadable lesions' such as abasic sites and 6-4 photoproduct (6-4 pyrimidine-pyrimidinone), thereby skipping the lesion. Repriming avoids fork degradation while leading to accumulation of internal ssDNA gaps behind the forks. Also able to incorporate nucleotides opposite DNA lesions such as 8oxoG, like a regular translesion synthesis DNA polymerase. Also required for reinitiating stalled forks after UV damage during nuclear DNA replication. Required for mitochondrial DNA (mtDNA) synthesis and replication, by reinitiating synthesis after UV damage or in the presence of chain-terminating nucleotides. Prevents APOBEC family-mediated DNA mutagenesis by repriming downstream of abasic site to prohibit error-prone translesion synthesis. Has non-overlapping function with POLH. In addition to its role in DNA damage response, also required to maintain efficient nuclear and mitochondrial DNA replication in unperturbed cells. The sequence is that of DNA-directed primase/polymerase protein from Homo sapiens (Human).